We begin with the raw amino-acid sequence, 442 residues long: G-protein coupled receptor family C group 5 member C (442 aa).

Residues Met1–Ala23 form the signal peptide. Residues Gln24–Gly50 are Extracellular-facing. Residues Ile51–Leu71 traverse the membrane as a helical segment. Over Val72–Ser85 the chain is Cytoplasmic. Residues Leu86–Ala106 traverse the membrane as a helical segment. Topologically, residues Cys107–Arg120 are extracellular. A helical transmembrane segment spans residues Phe121–Leu141. Residues His142–Val155 are Cytoplasmic-facing. Residues Ile156–Ile176 form a helical membrane-spanning segment. The Extracellular portion of the chain corresponds to Ile177–Asp209. The N-linked (GlcNAc...) asparagine glycan is linked to Asn192. A helical membrane pass occupies residues Phe210 to Ser230. The Cytoplasmic portion of the chain corresponds to Ala231–His242. The helical transmembrane segment at Gly243 to Met263 threads the bilayer. At Tyr264–Thr280 the chain is on the extracellular side. A helical membrane pass occupies residues Leu281–Val301. The Cytoplasmic portion of the chain corresponds to Ser302–Asp442. Phosphoserine is present on residues Ser345, Ser384, Ser404, and Ser407. Phosphotyrosine is present on Tyr415. Thr424 carries the phosphothreonine modification.

It belongs to the G-protein coupled receptor 3 family.

The protein localises to the cell membrane. Functionally, this retinoic acid-inducible G-protein coupled receptor provide evidence for a possible interaction between retinoid and G-protein signaling pathways. This chain is G-protein coupled receptor family C group 5 member C (GPRC5C), found in Bos taurus (Bovine).